A 369-amino-acid polypeptide reads, in one-letter code: Transforming protein Maf (369 aa).

Disordered stretches follow at residues Ser-57–Lys-85 and Gly-169–Phe-243. A compositionally biased stretch (basic residues) spans His-173–His-183. The span at Gly-184–Pro-193 shows a compositional bias: gly residues. Over residues His-194 to Ala-211 the composition is skewed to low complexity. Over residues Gly-212–Gly-226 the composition is skewed to gly residues. Residues Arg-274–Arg-299 form a basic motif region. The region spanning Arg-274–Leu-337 is the bZIP domain. The interval Leu-302–Leu-323 is leucine-zipper. The segment at Gly-341–Met-369 is disordered. Residues Asn-345–Ser-354 show a composition bias toward polar residues.

Belongs to the bZIP family. Maf subfamily.

It localises to the host nucleus. Functionally, might be a transcriptional trans-activator. The sequence is that of Transforming protein Maf (V-MAF) from Galliformes.